A 320-amino-acid polypeptide reads, in one-letter code: Protein LATERAL ROOT PRIMORDIUM 1 (320 aa).

A disordered region spans residues Gln90–Ala110. Residues Cys112, Cys115, Cys123, Cys128, Cys132, and Cys139 each contribute to the Zn(2+) site. A DNA-binding region (zn(2)-C6 fungal-type; degenerate) is located at residues Cys112–Cys139. The interval Ala150–Trp223 is disordered. The segment covering Gly168–Thr177 has biased composition (low complexity). The segment covering Ala193–Gln214 has biased composition (polar residues). Residues Ile256–His259 carry the Required for homo- and heterodimerization motif.

Belongs to the SHI protein family. As to quaternary structure, homodimer. In terms of tissue distribution, restricted to lateral root primordia.

It localises to the nucleus. In terms of biological role, transcription activator that binds DNA on 5'-ACTCTAC-3' and promotes auxin homeostasis-regulating gene expression (e.g. YUC genes), as well as genes affecting stamen development, cell expansion and timing of flowering. Synergistically with other SHI-related proteins, regulates gynoecium, stamen and leaf development in a dose-dependent manner, controlling apical-basal patterning. Promotes style and stigma formation, and influence vascular development during gynoecium development. May also have a role in the formation and/or maintenance of the shoot apical meristem (SAM). Modulates root growth. This chain is Protein LATERAL ROOT PRIMORDIUM 1 (LRP1), found in Arabidopsis thaliana (Mouse-ear cress).